We begin with the raw amino-acid sequence, 245 residues long: DNA repair protein RecO (245 aa).

This sequence belongs to the RecO family.

Involved in DNA repair and RecF pathway recombination. This Chromobacterium violaceum (strain ATCC 12472 / DSM 30191 / JCM 1249 / CCUG 213 / NBRC 12614 / NCIMB 9131 / NCTC 9757 / MK) protein is DNA repair protein RecO.